Reading from the N-terminus, the 984-residue chain is Respiratory nitrate reductase subunit alpha (984 aa).

The tract at residues 1–43 (MSRNDASQLDDGETTAESPPDDQANDAPEVGDPPGDPVDADSG) is disordered. The segment covering 8 to 24 (QLDDGETTAESPPDDQA) has biased composition (acidic residues). The 4Fe-4S Mo/W bis-MGD-type domain maps to 103 to 167 (DSVSRSTHSV…CYTDYVNADQ (65 aa)). H110, C114, C118, and C153 together coordinate [4Fe-4S] cluster. A Mo-bis(molybdopterin guanine dinucleotide)-binding site is contributed by D249.

It belongs to the prokaryotic molybdopterin-containing oxidoreductase family. As to quaternary structure, probable multiprotein complex; a catalytic heterodimer of an alpha and beta chain is proposed to associate with additional subunits involved in membrane attachment and electron transfer. [4Fe-4S] cluster serves as cofactor. Mo-bis(molybdopterin guanine dinucleotide) is required as a cofactor. In terms of processing, exported by the Tat system.

The protein resides in the cell membrane. The enzyme catalyses nitrate + a quinol = a quinone + nitrite + H2O. Inhibited by cyanide, azide and antimycin A. Enzyme stability is not dependent on salt concentration. Functionally, the respiratory membrane-bound nitrate reductase enzyme complex plays a role in generation of metabolic energy by using nitrate as a terminal electron acceptor during anaerobic conditions. The alpha chain is the actual site of nitrate reduction. This is Respiratory nitrate reductase subunit alpha (narG) from Haloferax mediterranei (strain ATCC 33500 / DSM 1411 / JCM 8866 / NBRC 14739 / NCIMB 2177 / R-4) (Halobacterium mediterranei).